A 212-amino-acid polypeptide reads, in one-letter code: MQWTLVVPVKALARAKSRLSDTADDGLRPGLALAFAQDTVAAALACPAVADVAVVTDDARAGRELAALGAGVVADEPGGGLNAALAHGAAVVRAARPESPVAALNADLPALRPAELARVLAAATQFPRAFLPDAAGIGTTLLTVAPGQELAPAFGADSRARHRASGAVELRLDAVDSVRQDVDTGGDLRSALALGVGPRTAAVAARLLIAGQ.

Thr139, Gly155, and Ser158 together coordinate phosphoenolpyruvate.

This sequence belongs to the CofC family.

The catalysed reaction is phosphoenolpyruvate + GTP + H(+) = enolpyruvoyl-2-diphospho-5'-guanosine + diphosphate. The protein operates within cofactor biosynthesis; coenzyme F420 biosynthesis. In terms of biological role, guanylyltransferase that catalyzes the activation of phosphoenolpyruvate (PEP) as enolpyruvoyl-2-diphospho-5'-guanosine, via the condensation of PEP with GTP. It is involved in the biosynthesis of coenzyme F420, a hydride carrier cofactor. The sequence is that of Phosphoenolpyruvate guanylyltransferase from Streptomyces coelicolor (strain ATCC BAA-471 / A3(2) / M145).